A 169-amino-acid chain; its full sequence is Non-specific lipid transfer protein GPI-anchored 11 (169 aa).

The first 23 residues, 1 to 23 (MAYATILMIFSVVALMSGERAHA), serve as a signal peptide directing secretion. Cystine bridges form between C27–C70, C37–C54, C55–C95, and C68–C105. Residue S146 is the site of GPI-anchor amidated serine attachment. A propeptide spans 147–169 (SDASLLSVSFAFVIFMALISSFY) (removed in mature form).

Belongs to the plant LTP family. Expressed in a vascular-specific manner, mainly in roots, and, to a lower extent, in hypocotyls, seedlings stems and flowers.

Its subcellular location is the cell membrane. The protein resides in the secreted. Its function is as follows. Probable lipid transfer protein. Proteoglycan-like factor that exhibits xylogen activity consisting in mediating local and inductive cell-cell interactions required for xylem differentiation. The chain is Non-specific lipid transfer protein GPI-anchored 11 from Arabidopsis thaliana (Mouse-ear cress).